Consider the following 239-residue polypeptide: Uridylate kinase (239 aa).

An ATP-binding site is contributed by 10-13; the sequence is KLSG. UMP is bound at residue Gly-53. ATP-binding residues include Gly-54 and Arg-58. UMP is bound by residues Asp-73 and 135-142; that span reads TGRPYFTT. The ATP site is built by Asn-163, Tyr-169, and Asp-172.

It belongs to the UMP kinase family. In terms of assembly, homohexamer.

The protein resides in the cytoplasm. It carries out the reaction UMP + ATP = UDP + ADP. It functions in the pathway pyrimidine metabolism; CTP biosynthesis via de novo pathway; UDP from UMP (UMPK route): step 1/1. Inhibited by UTP. In terms of biological role, catalyzes the reversible phosphorylation of UMP to UDP. The sequence is that of Uridylate kinase from Mycoplasmopsis synoviae (strain 53) (Mycoplasma synoviae).